The sequence spans 171 residues: Large ribosomal subunit protein uL10 (171 aa).

This sequence belongs to the universal ribosomal protein uL10 family. As to quaternary structure, part of the ribosomal stalk of the 50S ribosomal subunit. The N-terminus interacts with L11 and the large rRNA to form the base of the stalk. The C-terminus forms an elongated spine to which L12 dimers bind in a sequential fashion forming a multimeric L10(L12)X complex.

Functionally, forms part of the ribosomal stalk, playing a central role in the interaction of the ribosome with GTP-bound translation factors. The polypeptide is Large ribosomal subunit protein uL10 (Corynebacterium jeikeium (strain K411)).